We begin with the raw amino-acid sequence, 259 residues long: Polycomb group RING finger protein 1 (259 aa).

The residue at position 2 (Ala2) is an N-acetylalanine. At Ser3 the chain carries Phosphoserine. Lys24 is covalently cross-linked (Glycyl lysine isopeptide (Lys-Gly) (interchain with G-Cter in SUMO2)). The RING-type zinc-finger motif lies at 47–86 (CCLCAGYFVDATTITECLHTFCKSCIVKYLQTSKYCPMCN). Positions 86–247 (NIKIHETQPL…LSRWFGKPSP (162 aa)) are required for repressor activity. Residue Lys88 forms a Glycyl lysine isopeptide (Lys-Gly) (interchain with G-Cter in SUMO2) linkage. The required for the interaction with the KDM2B-SKP1 heterodimeric complex stretch occupies residues 150 to 255 (LPFSSFDHSK…SPLLLQYSVK (106 aa)). The RING-finger and WD40-associated ubiquitin-like domain (RAWUL); sufficient for interaction with BCOR and BCORL1 stretch occupies residues 167–255 (EQLNLCLERL…SPLLLQYSVK (89 aa)).

As to quaternary structure, interacts with BCORL1, forming heterodimers. The PCGF1-BCORL1 heterodimeric complex interacts with the KDM2B-SKP1 heterodimeric complex to form a homotetrameric polycomb repression complex 1 (PRC1.1). Component of the repressive BCOR complex containing a Polycomb group subcomplex at least composed of RYBP, RING1 and RNF2/RING2. Specifically interacts with BCOR, RING1 and RNF2/RING2. Component of a PRC1-like complex. Interacts with CBX6, CBX7 and CBX8. Interacts with DPPA4, NANOG, POU5F1 and RYBP. As to expression, ubiquitous.

The protein localises to the nucleus. Its function is as follows. Component of the Polycomb group (PcG) multiprotein BCOR complex, a complex required to maintain the transcriptionally repressive state of some genes, such as BCL6 and the cyclin-dependent kinase inhibitor, CDKN1A. Transcriptional repressor that may be targeted to the DNA by BCL6; this transcription repressor activity may be related to PKC signaling pathway. Represses CDKN1A expression by binding to its promoter, and this repression is dependent on the retinoic acid response element (RARE element). Promotes cell cycle progression and enhances cell proliferation as well. May have a positive role in tumor cell growth by down-regulating CDKN1A. Component of a Polycomb group (PcG) multiprotein PRC1-like complex, a complex class required to maintain the transcriptionally repressive state of many genes, including Hox genes, throughout development. PcG PRC1 complex acts via chromatin remodeling and modification of histones; it mediates monoubiquitination of histone H2A 'Lys-119', rendering chromatin heritably changed in its expressibility. Within the PRC1-like complex, regulates RNF2 ubiquitin ligase activity. Regulates the expression of DPPA4 and NANOG in the NT2 embryonic carcinoma cells. This chain is Polycomb group RING finger protein 1 (PCGF1), found in Homo sapiens (Human).